The sequence spans 427 residues: 3-phosphoshikimate 1-carboxyvinyltransferase (427 aa).

K22, S23, and R27 together coordinate 3-phosphoshikimate. K22 contacts phosphoenolpyruvate. Phosphoenolpyruvate-binding residues include G96 and R124. 7 residues coordinate 3-phosphoshikimate: S170, S171, Q172, S198, D314, N337, and K341. Q172 contributes to the phosphoenolpyruvate binding site. D314 (proton acceptor) is an active-site residue. Phosphoenolpyruvate is bound by residues R345, R387, and K412.

This sequence belongs to the EPSP synthase family. As to quaternary structure, monomer.

The protein resides in the cytoplasm. It catalyses the reaction 3-phosphoshikimate + phosphoenolpyruvate = 5-O-(1-carboxyvinyl)-3-phosphoshikimate + phosphate. Its pathway is metabolic intermediate biosynthesis; chorismate biosynthesis; chorismate from D-erythrose 4-phosphate and phosphoenolpyruvate: step 6/7. Catalyzes the transfer of the enolpyruvyl moiety of phosphoenolpyruvate (PEP) to the 5-hydroxyl of shikimate-3-phosphate (S3P) to produce enolpyruvyl shikimate-3-phosphate and inorganic phosphate. This Sulfurovum sp. (strain NBC37-1) protein is 3-phosphoshikimate 1-carboxyvinyltransferase.